The primary structure comprises 207 residues: MRRGDPAPRWPGAVLPRAFFDRVATDVAPQLLNKILAAADGRAGRIVEVEAYAGAIDPAAHTYRGKTPRNATMFGPPGHLYVYFTYGMHWCCNCVCGPDGTGTGVLIRALEPLQGLERMRAARPPQTRDRDLCRGPARLTQAMGIGGAQDGVDLIGAHEGFAIVDDGSAPPADLAGGPRIGIRVGTDLPWRWSVPGNRYVSGPVTRR.

This sequence belongs to the DNA glycosylase MPG family.

This chain is Putative 3-methyladenine DNA glycosylase, found in Burkholderia lata (strain ATCC 17760 / DSM 23089 / LMG 22485 / NCIMB 9086 / R18194 / 383).